The following is a 323-amino-acid chain: Aspartate carbamoyltransferase catalytic subunit (323 aa).

R55 and T56 together coordinate carbamoyl phosphate. Residue K83 coordinates L-aspartate. Residues R105, H138, and Q141 each coordinate carbamoyl phosphate. L-aspartate contacts are provided by R181 and R235. Carbamoyl phosphate contacts are provided by G276 and P277.

It belongs to the aspartate/ornithine carbamoyltransferase superfamily. ATCase family. Heterododecamer (2C3:3R2) of six catalytic PyrB chains organized as two trimers (C3), and six regulatory PyrI chains organized as three dimers (R2).

The enzyme catalyses carbamoyl phosphate + L-aspartate = N-carbamoyl-L-aspartate + phosphate + H(+). The protein operates within pyrimidine metabolism; UMP biosynthesis via de novo pathway; (S)-dihydroorotate from bicarbonate: step 2/3. Functionally, catalyzes the condensation of carbamoyl phosphate and aspartate to form carbamoyl aspartate and inorganic phosphate, the committed step in the de novo pyrimidine nucleotide biosynthesis pathway. This Corynebacterium aurimucosum (strain ATCC 700975 / DSM 44827 / CIP 107346 / CN-1) (Corynebacterium nigricans) protein is Aspartate carbamoyltransferase catalytic subunit.